A 244-amino-acid polypeptide reads, in one-letter code: MRKYYPIIVALDFPEEKRALEIAEKLVPYIKNFKVGLELFSVAGPHIVKALKEMGTNVFIDLKLFDIPNTVVRTLDRLLALEPFMVTLHILGGEEMLRESVKLVSQYKESNKTEYPYLLGVTVLTSFNEETLRRSWGISRSLPEQVLFLAQLAQETGLDGVIASPWEIELLRNNLKRPMLIVTPGIRLTKEKTDDQQRIMTPREALERGSDYLVIGRPITQSPDPYEVIQNIRSQIEDIVESRL.

Substrate is bound by residues D12, K34, 61-70 (DLKLFDIPNT), T125, R187, Q196, G216, and R217. Catalysis depends on K63, which acts as the Proton donor.

The protein belongs to the OMP decarboxylase family. Type 1 subfamily. In terms of assembly, homodimer.

The enzyme catalyses orotidine 5'-phosphate + H(+) = UMP + CO2. It functions in the pathway pyrimidine metabolism; UMP biosynthesis via de novo pathway; UMP from orotate: step 2/2. Functionally, catalyzes the decarboxylation of orotidine 5'-monophosphate (OMP) to uridine 5'-monophosphate (UMP). This Dictyoglomus turgidum (strain DSM 6724 / Z-1310) protein is Orotidine 5'-phosphate decarboxylase.